The chain runs to 91 residues: DNA-binding protein HU (91 aa).

It belongs to the bacterial histone-like protein family.

Histone-like DNA-binding protein which is capable of wrapping DNA to stabilize it, and thus to prevent its denaturation under extreme environmental conditions. Also seems to act as a fortuitous virulence factor in delayed sequelae by binding to heparan sulfate-proteoglycans in the extracellular matrix of target organs and acting as a nidus for in situ immune complex formation. This Streptococcus mutans serotype c (strain ATCC 700610 / UA159) protein is DNA-binding protein HU (hup).